A 504-amino-acid polypeptide reads, in one-letter code: Light-independent protochlorophyllide reductase subunit B (504 aa).

Aspartate 36 contacts [4Fe-4S] cluster. Aspartate 279 functions as the Proton donor in the catalytic mechanism. 414 to 415 (GL) serves as a coordination point for substrate.

The protein belongs to the ChlB/BchB/BchZ family. Protochlorophyllide reductase is composed of three subunits; BchL, BchN and BchB. Forms a heterotetramer of two BchB and two BchN subunits. It depends on [4Fe-4S] cluster as a cofactor.

It catalyses the reaction chlorophyllide a + oxidized 2[4Fe-4S]-[ferredoxin] + 2 ADP + 2 phosphate = protochlorophyllide a + reduced 2[4Fe-4S]-[ferredoxin] + 2 ATP + 2 H2O. It participates in porphyrin-containing compound metabolism; bacteriochlorophyll biosynthesis (light-independent). Functionally, component of the dark-operative protochlorophyllide reductase (DPOR) that uses Mg-ATP and reduced ferredoxin to reduce ring D of protochlorophyllide (Pchlide) to form chlorophyllide a (Chlide). This reaction is light-independent. The NB-protein (BchN-BchB) is the catalytic component of the complex. The protein is Light-independent protochlorophyllide reductase subunit B of Acidiphilium rubrum.